We begin with the raw amino-acid sequence, 288 residues long: Serine/threonine-protein kinase pef1 (288 aa).

One can recognise a Protein kinase domain in the interval 3-285; sequence YQRLEKLGEG…GQDALQHAWF (283 aa). Residues 9–17 and lysine 32 each bind ATP; that span reads LGEGTYAHV. At threonine 13 the chain carries Phosphothreonine. Residue tyrosine 14 is modified to Phosphotyrosine. The active-site Proton acceptor is aspartate 126.

It belongs to the protein kinase superfamily. CMGC Ser/Thr protein kinase family. CDC2/CDKX subfamily. In terms of assembly, interacts with the pas1 cyclin.

The enzyme catalyses L-seryl-[protein] + ATP = O-phospho-L-seryl-[protein] + ADP + H(+). The catalysed reaction is L-threonyl-[protein] + ATP = O-phospho-L-threonyl-[protein] + ADP + H(+). In Schizosaccharomyces pombe (strain 972 / ATCC 24843) (Fission yeast), this protein is Serine/threonine-protein kinase pef1 (pef1).